Reading from the N-terminus, the 275-residue chain is Adenylate kinase 2 (275 aa).

Residue Gly2 is the site of N-myristoyl glycine attachment. The required for cell membrane translocation but dispensable for cell membrane localization stretch occupies residues 21–30; that stretch reads KKKEKKKKKK. 39–44 contributes to the ATP binding site; the sequence is GSGKDT. The NMP stretch occupies residues 59 to 97; that stretch reads CISKLLKEYKEEYNKENVLNEEENYFDEIEKCMIDGSLV. AMP contacts are provided by residues 95–97, 126–129, and Gln133; these read SLV and GFPR. Residue Arg164 participates in ATP binding. The tract at residues 165 to 214 is LID; that stretch reads IIDPITNISYNENIIQIIKKKREGQELSDKEQKQLIIDNHLYNNLSNDIL. AMP is bound by residues Arg220 and Arg231.

Belongs to the adenylate kinase family. As to quaternary structure, monomer. Oligomer. Heterodimer composed of NMT and AK2; AK2 myristoylation stabilizes the complex. In terms of processing, myristoylation is required for cell membrane localization. Post-translationally, may be palmitoylated at Cys-4 which stabilizes cell membrane localization of the myristoylated protein.

Its subcellular location is the parasitophorous vacuole membrane. The catalysed reaction is AMP + ATP = 2 ADP. In terms of biological role, catalyzes the reversible transfer of the terminal phosphate group between ATP and AMP. Has very low activity with CTP, GTP, ITP and UTP and no activity with GMP, UMP or IMP in vitro. The protein is Adenylate kinase 2 of Plasmodium falciparum (isolate 3D7).